Consider the following 436-residue polypeptide: 3-ketoacyl-CoA thiolase (436 aa).

Cys-99 functions as the Acyl-thioester intermediate in the catalytic mechanism. Catalysis depends on proton acceptor residues His-392 and Cys-422.

It belongs to the thiolase-like superfamily. Thiolase family. As to quaternary structure, heterotetramer of two alpha chains (FadJ) and two beta chains (FadI).

Its subcellular location is the cytoplasm. The catalysed reaction is an acyl-CoA + acetyl-CoA = a 3-oxoacyl-CoA + CoA. The protein operates within lipid metabolism; fatty acid beta-oxidation. Its function is as follows. Catalyzes the final step of fatty acid oxidation in which acetyl-CoA is released and the CoA ester of a fatty acid two carbons shorter is formed. The sequence is that of 3-ketoacyl-CoA thiolase from Salmonella paratyphi A (strain AKU_12601).